Here is a 342-residue protein sequence, read N- to C-terminus: MTPVNVALIRDTKWLTLEVCREFQRGTCSRADAECRFAHPPRVCHVENGRVVACFDSLKGRCTRENCKYLHPPPHLKSQLEVNGRNNLIQQKTAAAMFAQHMQLMLQNAQMSSLASFPMNPSLAANPAMAFNPYMTHPGMGLVPAELLPNGPVLISGNPPLALPGVPGPKPIRTDRLEVCREFQRGNCTRGESECRYAHPTDVSMIEVTDNSVTICMDYIKGRCSREKCKYFHPPPHLQAKLRAAHHQMNHSAANAMALPHGALQLIPKRSALDKANGATPVFNPSVFHCQQALANMQIPQQAFIPTVPMMHGATPSTVSTATPPASNVPYVPTTTGNQLKY.

C3H1-type zinc fingers lie at residues 14 to 42 (WLTL…HPPR), 48 to 74 (NGRV…HPPP), 174 to 202 (TDRL…HPTD), and 210 to 236 (DNSV…HPPP). Residues 316 to 326 (PSTVSTATPPA) are compositionally biased toward low complexity. The segment at 316 to 342 (PSTVSTATPPASNVPYVPTTTGNQLKY) is disordered. Polar residues predominate over residues 333–342 (PTTTGNQLKY).

The protein belongs to the muscleblind family.

Its subcellular location is the nucleus. It localises to the cytoplasm. Mediates pre-mRNA alternative splicing regulation. Acts either as activator or repressor of splicing on specific pre-mRNA targets. Inhibits cardiac troponin-T (TNNT2) pre-mRNA exon inclusion but induces insulin receptor (IR) pre-mRNA exon inclusion in muscle. Antagonizes the alternative splicing activity pattern of CELF proteins. Could inhibit terminal muscle differentiation, acting at approximately the time of myogenin induction. This chain is Muscleblind-like protein 3 (Mbnl3), found in Mus musculus (Mouse).